Here is a 218-residue protein sequence, read N- to C-terminus: Glutathione S-transferase Mu 4 (218 aa).

The 88-residue stretch at 1-88 (MPMTLGYWDI…YIARKHNLCG (88 aa)) folds into the GST N-terminal domain. Residues 7 to 8 (YW), 46 to 50 (WLSEK), 59 to 60 (NL), and 72 to 73 (QS) each bind glutathione. The GST C-terminal domain maps to 90–208 (TEEEKIRVDI…KTSRFLRTPL (119 aa)). Tyrosine 116 is a substrate binding site.

The protein belongs to the GST superfamily. Mu family. As to quaternary structure, homodimer.

The protein localises to the cytoplasm. It carries out the reaction RX + glutathione = an S-substituted glutathione + a halide anion + H(+). The catalysed reaction is 1-chloro-2,4-dinitrobenzene + glutathione = 2,4-dinitrophenyl-S-glutathione + chloride + H(+). It catalyses the reaction (13S,14S)-epoxy-(4Z,7Z,9E,11E,16Z,19Z)-docosahexaenoate + glutathione = (13R)-S-glutathionyl-(14S)-hydroxy-(4Z,7Z,9E,11E,16Z,19Z)-docosahexaenoate. The enzyme catalyses leukotriene C4 = leukotriene A4 + glutathione. Functionally, conjugation of reduced glutathione to a wide number of exogenous and endogenous hydrophobic electrophiles. Catalyzes the conjugation of leukotriene A4 with reduced glutathione (GSH) to form leukotriene C4. Can also catalyze the transfer of a glutathionyl group from glutathione (GSH) to 13(S),14(S)-epoxy-docosahexaenoic acid to form maresin conjugate in tissue regeneration 1 (MCTR1), a bioactive lipid mediator that possess potent anti-inflammatory and proresolving actions. This chain is Glutathione S-transferase Mu 4 (Gstm4), found in Rattus norvegicus (Rat).